The chain runs to 116 residues: Putative iron-sulfur cluster insertion protein ErpA (116 aa).

Iron-sulfur cluster-binding residues include Cys-44, Cys-108, and Cys-110.

Belongs to the HesB/IscA family. As to quaternary structure, homodimer. Requires iron-sulfur cluster as cofactor.

Required for insertion of 4Fe-4S clusters. The protein is Putative iron-sulfur cluster insertion protein ErpA of Azoarcus sp. (strain BH72).